A 78-amino-acid polypeptide reads, in one-letter code: uncharacterized protein (78 aa).

Residues 1–22 (MFKKSVLFATLLSGVMAFSTNA) form the signal peptide.

Belongs to the BhsA/McbA family.

Its subcellular location is the periplasm. In terms of biological role, probably involved in reactive chlorine species (RCS) stress resistance. This is an uncharacterized protein from Escherichia coli (strain K12).